A 377-amino-acid polypeptide reads, in one-letter code: Spermidine/putrescine import ATP-binding protein PotA (377 aa).

The region spanning 18–248 (IRLSGISKSF…PKNLFVARFI (231 aa)) is the ABC transporter domain. 50-57 (GPSGCGKT) contacts ATP.

It belongs to the ABC transporter superfamily. Spermidine/putrescine importer (TC 3.A.1.11.1) family. As to quaternary structure, the complex is composed of two ATP-binding proteins (PotA), two transmembrane proteins (PotB and PotC) and a solute-binding protein (PotD).

It is found in the cell inner membrane. The enzyme catalyses ATP + H2O + polyamine-[polyamine-binding protein]Side 1 = ADP + phosphate + polyamineSide 2 + [polyamine-binding protein]Side 1.. In terms of biological role, part of the ABC transporter complex PotABCD involved in spermidine/putrescine import. Responsible for energy coupling to the transport system. In Vibrio cholerae serotype O1 (strain ATCC 39315 / El Tor Inaba N16961), this protein is Spermidine/putrescine import ATP-binding protein PotA.